Consider the following 305-residue polypeptide: Heat stress transcription factor B-4d (305 aa).

Residues 201 to 230 are hydrophobic repeat HR-A/B; sequence LRRRNSLLLSELAHMRKLYNDIIYFLQNHV. The short motif at 286 to 289 is the Nuclear localization signal element; the sequence is KKRR. The interval 286-305 is disordered; the sequence is KKRRVQLVQEDEGDEQGSEG. The span at 294–305 shows a compositional bias: acidic residues; it reads QEDEGDEQGSEG.

It belongs to the HSF family. Class B subfamily. Homotrimer. In terms of processing, exhibits temperature-dependent phosphorylation.

It is found in the nucleus. Functionally, transcriptional regulator that specifically binds DNA of heat shock promoter elements (HSE). The polypeptide is Heat stress transcription factor B-4d (HSFB4D) (Oryza sativa subsp. japonica (Rice)).